Reading from the N-terminus, the 318-residue chain is Biotin synthase (318 aa).

Residues 44–270 (LCGDAVNLCS…INPTANIRLA (227 aa)) enclose the Radical SAM core domain. Residues Cys62, Cys66, and Cys69 each contribute to the [4Fe-4S] cluster site. The [2Fe-2S] cluster site is built by Ser106, Cys138, Cys198, and Arg268.

It belongs to the radical SAM superfamily. Biotin synthase family. Homodimer. The cofactor is [4Fe-4S] cluster. Requires [2Fe-2S] cluster as cofactor.

The catalysed reaction is (4R,5S)-dethiobiotin + (sulfur carrier)-SH + 2 reduced [2Fe-2S]-[ferredoxin] + 2 S-adenosyl-L-methionine = (sulfur carrier)-H + biotin + 2 5'-deoxyadenosine + 2 L-methionine + 2 oxidized [2Fe-2S]-[ferredoxin]. Its pathway is cofactor biosynthesis; biotin biosynthesis; biotin from 7,8-diaminononanoate: step 2/2. Catalyzes the conversion of dethiobiotin (DTB) to biotin by the insertion of a sulfur atom into dethiobiotin via a radical-based mechanism. The sequence is that of Biotin synthase from Alkaliphilus metalliredigens (strain QYMF).